We begin with the raw amino-acid sequence, 178 residues long: ATP-dependent protease subunit HslV (178 aa).

Residue Thr7 is part of the active site. Gly162, Cys165, and Thr168 together coordinate Na(+).

Belongs to the peptidase T1B family. HslV subfamily. In terms of assembly, a double ring-shaped homohexamer of HslV is capped on each side by a ring-shaped HslU homohexamer. The assembly of the HslU/HslV complex is dependent on binding of ATP.

It localises to the cytoplasm. The enzyme catalyses ATP-dependent cleavage of peptide bonds with broad specificity.. Allosterically activated by HslU binding. Protease subunit of a proteasome-like degradation complex believed to be a general protein degrading machinery. This Dechloromonas aromatica (strain RCB) protein is ATP-dependent protease subunit HslV.